The chain runs to 286 residues: 4-diphosphocytidyl-2-C-methyl-D-erythritol kinase (286 aa).

The active site involves lysine 11. Position 94–104 (94–104 (PMGGGIGGGSS)) interacts with ATP. Residue aspartate 136 is part of the active site.

The protein belongs to the GHMP kinase family. IspE subfamily.

The enzyme catalyses 4-CDP-2-C-methyl-D-erythritol + ATP = 4-CDP-2-C-methyl-D-erythritol 2-phosphate + ADP + H(+). The protein operates within isoprenoid biosynthesis; isopentenyl diphosphate biosynthesis via DXP pathway; isopentenyl diphosphate from 1-deoxy-D-xylulose 5-phosphate: step 3/6. Catalyzes the phosphorylation of the position 2 hydroxy group of 4-diphosphocytidyl-2C-methyl-D-erythritol. The protein is 4-diphosphocytidyl-2-C-methyl-D-erythritol kinase of Pseudomonas putida (strain ATCC 47054 / DSM 6125 / CFBP 8728 / NCIMB 11950 / KT2440).